The chain runs to 157 residues: 6,7-dimethyl-8-ribityllumazine synthase (157 aa).

5-amino-6-(D-ribitylamino)uracil-binding positions include phenylalanine 26, 60-62 (ALE), and 86-88 (AVI). 91–92 (ET) is a (2S)-2-hydroxy-3-oxobutyl phosphate binding site. The active-site Proton donor is the histidine 94. Asparagine 119 serves as a coordination point for 5-amino-6-(D-ribitylamino)uracil. Position 133 (arginine 133) interacts with (2S)-2-hydroxy-3-oxobutyl phosphate.

This sequence belongs to the DMRL synthase family.

The enzyme catalyses (2S)-2-hydroxy-3-oxobutyl phosphate + 5-amino-6-(D-ribitylamino)uracil = 6,7-dimethyl-8-(1-D-ribityl)lumazine + phosphate + 2 H2O + H(+). It participates in cofactor biosynthesis; riboflavin biosynthesis; riboflavin from 2-hydroxy-3-oxobutyl phosphate and 5-amino-6-(D-ribitylamino)uracil: step 1/2. In terms of biological role, catalyzes the formation of 6,7-dimethyl-8-ribityllumazine by condensation of 5-amino-6-(D-ribitylamino)uracil with 3,4-dihydroxy-2-butanone 4-phosphate. This is the penultimate step in the biosynthesis of riboflavin. The polypeptide is 6,7-dimethyl-8-ribityllumazine synthase (Laribacter hongkongensis (strain HLHK9)).